We begin with the raw amino-acid sequence, 215 residues long: Formate dehydrogenase subunit beta (215 aa).

Positions 3-32 (KGFFVDTTRCTACRGCQVACKQWHGNPATP) constitute a 4Fe-4S ferredoxin-type 1 domain. Residues C12, C15, C18, C22, C73, C76, C81, C121, C138, C141, C153, and C157 each coordinate [4Fe-4S] cluster. Positions 129–168 (VAESNQMAKCDMCIDRITNGLRPACVTSCPTGAMNFGDLS) constitute a 4Fe-4S ferredoxin-type 2 domain.

As to quaternary structure, heterodimer of alpha (FdhA) and beta (FdhB) subunits. [4Fe-4S] cluster serves as cofactor.

It is found in the periplasm. Its function is as follows. Beta chain of the formate dehydrogenase (FDH) catalyzes the reversible two-electron oxidation of formate to carbon dioxide. FDH loses activity in the presence of air, but this activity can be restored. This chain is an electron transfer unit. The sequence is that of Formate dehydrogenase subunit beta from Megalodesulfovibrio gigas (strain ATCC 19364 / DSM 1382 / NCIMB 9332 / VKM B-1759) (Desulfovibrio gigas).